The chain runs to 276 residues: NADPH-dependent 7-cyano-7-deazaguanine reductase (276 aa).

80–82 (VES) contacts substrate. 82–83 (SK) serves as a coordination point for NADPH. Cys-183 serves as the catalytic Thioimide intermediate. Asp-190 serves as the catalytic Proton donor. 222–223 (HE) lines the substrate pocket. 251 to 252 (RG) serves as a coordination point for NADPH.

This sequence belongs to the GTP cyclohydrolase I family. QueF type 2 subfamily. Homodimer.

The protein localises to the cytoplasm. The enzyme catalyses 7-aminomethyl-7-carbaguanine + 2 NADP(+) = 7-cyano-7-deazaguanine + 2 NADPH + 3 H(+). The protein operates within tRNA modification; tRNA-queuosine biosynthesis. In terms of biological role, catalyzes the NADPH-dependent reduction of 7-cyano-7-deazaguanine (preQ0) to 7-aminomethyl-7-deazaguanine (preQ1). The sequence is that of NADPH-dependent 7-cyano-7-deazaguanine reductase from Burkholderia orbicola (strain MC0-3).